A 196-amino-acid polypeptide reads, in one-letter code: Serine recombinase PinR (196 aa).

A Resolvase/invertase-type recombinase catalytic domain is found at 3-143; the sequence is RIFAYCRIST…SGIVRARGAG (141 aa). Serine 11 acts as the O-(5'-phospho-DNA)-serine intermediate in catalysis.

It belongs to the site-specific recombinase resolvase family.

This is Serine recombinase PinR (pinR) from Escherichia coli (strain K12).